The chain runs to 230 residues: Ribonuclease 3 (230 aa).

In terms of domain architecture, RNase III spans 5-125 (YSRFYNILGY…VIGAIYLDSD (121 aa)). Glutamate 40 contacts Mg(2+). The active site involves aspartate 44. Mg(2+) is bound by residues aspartate 111 and glutamate 114. Glutamate 114 is an active-site residue. In terms of domain architecture, DRBM spans 153–223 (DSKSKLQEIL…AEKMIEMLSQ (71 aa)).

Belongs to the ribonuclease III family. Homodimer. The cofactor is Mg(2+).

The protein localises to the cytoplasm. It catalyses the reaction Endonucleolytic cleavage to 5'-phosphomonoester.. In terms of biological role, digests double-stranded RNA. Involved in the processing of primary rRNA transcript to yield the immediate precursors to the large and small rRNAs (23S and 16S). Processes some mRNAs, and tRNAs when they are encoded in the rRNA operon. Processes pre-crRNA and tracrRNA of type II CRISPR loci if present in the organism. The sequence is that of Ribonuclease 3 from Francisella tularensis subsp. holarctica (strain FTNF002-00 / FTA).